Reading from the N-terminus, the 61-residue chain is Large ribosomal subunit protein uL30 (61 aa).

This sequence belongs to the universal ribosomal protein uL30 family. Part of the 50S ribosomal subunit.

This chain is Large ribosomal subunit protein uL30, found in Corynebacterium urealyticum (strain ATCC 43042 / DSM 7109).